A 465-amino-acid polypeptide reads, in one-letter code: Gamma-aminobutyric acid receptor subunit rho-2 (465 aa).

The signal sequence occupies residues 1–20; the sequence is MPYFTRLILFLFCLMVLVES. At 21–260 the chain is on the extracellular side; the sequence is RKPKRKRWTG…LYINFTLRRH (240 aa). Position 105 (arginine 105) interacts with 4-aminobutanoate. Asparagine 120 is a glycosylation site (N-linked (GlcNAc...) asparagine). Serine 169 is a 4-aminobutanoate binding site. Cysteine 178 and cysteine 192 are disulfide-bonded. Residue glutamate 197 participates in 4-aminobutanoate binding. Asparagine 254 carries N-linked (GlcNAc...) asparagine glycosylation. A helical transmembrane segment spans residues 261–281; that stretch reads IFFFLLQTYFPATLMVMLSWV. Over 282-293 the chain is Cytoplasmic; that stretch reads SFWIDRRAVPAR. A helical transmembrane segment spans residues 294-314; that stretch reads VSLGITTVLTMTTIITGVNAS. At 315–325 the chain is on the extracellular side; that stretch reads MPRVSYVKAVD. A helical transmembrane segment spans residues 326–346; the sequence is IYLWVSFVFVFLSVLEYAAVN. The Cytoplasmic segment spans residues 347-443; that stretch reads YLTTVQERKE…IFQNTHAIDK (97 aa). A helical transmembrane segment spans residues 444–464; the sequence is YSRLIFPASYIFFNLIYWSVF. Serine 465 is a topological domain (extracellular).

Belongs to the ligand-gated ion channel (TC 1.A.9) family. Gamma-aminobutyric acid receptor (TC 1.A.9.5) subfamily. GABRR2 sub-subfamily. As to quaternary structure, three rho subunits (rho-1/GBRR1, rho-2/GBRR2 and rho-3/GBRR3) coassemble either to form functional homopentamers or heteropentamers. Rho-2 is unable to form a functional homopentamer. Interacts with SQSTM1.

It is found in the postsynaptic cell membrane. The protein resides in the cell membrane. The enzyme catalyses chloride(in) = chloride(out). In terms of biological role, rho subunit of the pentameric ligand-gated chloride channels responsible for mediating the effects of gamma-aminobutyric acid (GABA), the major inhibitory neurotransmitter in the brain. Rho-containing GABA-gated chloride channels are a subclass of GABA(A) receptors (GABAARs) entirely composed of rho subunits, where GABA molecules bind at the rho intersubunit interfaces. When activated by GABA, rho-GABAARs selectively allow the flow of chloride anions across the cell membrane down their electrochemical gradient. Rho-2 GABAARs may contribute to the regulation of glial development in the cerebellum by controlling extrasynaptic transmission. Rho-2 GABAARs are also involved in neuronal tonic (extrasynaptic) and phasic (synaptic) transmission in the Purkinje neurons of the cerebellum. Rho-2 GABAARs expressed in retina may play a role in retinal neurotransmission. This chain is Gamma-aminobutyric acid receptor subunit rho-2, found in Homo sapiens (Human).